Reading from the N-terminus, the 83-residue chain is Cytochrome b559 subunit alpha (83 aa).

A helical membrane pass occupies residues 21 to 35 (VIHSITIPSLFVAGW). His-23 contacts heme.

Belongs to the PsbE/PsbF family. As to quaternary structure, heterodimer of an alpha subunit and a beta subunit. PSII is composed of 1 copy each of membrane proteins PsbA, PsbB, PsbC, PsbD, PsbE, PsbF, PsbH, PsbI, PsbJ, PsbK, PsbL, PsbM, PsbT, PsbX, PsbY, PsbZ, Psb30/Ycf12, at least 3 peripheral proteins of the oxygen-evolving complex and a large number of cofactors. It forms dimeric complexes. It depends on heme b as a cofactor.

The protein localises to the plastid. Its subcellular location is the chloroplast thylakoid membrane. In terms of biological role, this b-type cytochrome is tightly associated with the reaction center of photosystem II (PSII). PSII is a light-driven water:plastoquinone oxidoreductase that uses light energy to abstract electrons from H(2)O, generating O(2) and a proton gradient subsequently used for ATP formation. It consists of a core antenna complex that captures photons, and an electron transfer chain that converts photonic excitation into a charge separation. This Nephroselmis olivacea (Green alga) protein is Cytochrome b559 subunit alpha.